Consider the following 411-residue polypeptide: Dipeptidase 1 (411 aa).

The signal sequence occupies residues 1-16; that stretch reads MWSGWWLWPLVAVCTA. 2 residues coordinate Zn(2+): H36 and D38. N-linked (GlcNAc...) asparagine glycosylation is present at N57. C87 and C170 are oxidised to a cystine. Residue E141 coordinates Zn(2+). Position 168 (H168) interacts with substrate. Residues H214 and H235 each contribute to the Zn(2+) site. C242 and C274 form a disulfide bridge. Residue R246 participates in substrate binding. N-linked (GlcNAc...) asparagine glycosylation is present at N279. Residue D304 coordinates substrate. Residues N332 and N358 are each glycosylated (N-linked (GlcNAc...) asparagine). S385 carries GPI-anchor amidated serine lipidation. Positions 386–411 are cleaved as a propeptide — removed in mature form; that stretch reads GASSLHRHWGLLLASLAPLVLCLSLL.

Belongs to the metallo-dependent hydrolases superfamily. Peptidase M19 family. Homodimer; disulfide-linked. The cofactor is Zn(2+). As to expression, expressed in lung and kidneys.

Its subcellular location is the apical cell membrane. It localises to the cell projection. It is found in the microvillus membrane. It catalyses the reaction an L-aminoacyl-L-amino acid + H2O = 2 an L-alpha-amino acid. The enzyme catalyses leukotriene D4 + H2O = leukotriene E4 + glycine. The catalysed reaction is a beta-lactam + H2O = a substituted beta-amino acid. It carries out the reaction L-cystine-bis-glycine + 2 H2O = L-cystine + 2 glycine. It catalyses the reaction glycyldehydrophenylalanine + H2O = 2,3-didehydrophenylalanine + glycine. Inhibited by L-penicillamine. Beta-lactamase activity is inhibited by cilastatin. Its function is as follows. Hydrolyzes a wide range of dipeptides including the conversion of leukotriene D4 to leukotriene E4. Hydrolyzes cystinyl-bis-glycine (cys-bis-gly) formed during glutathione degradation. Also possesses beta lactamase activity and can hydrolyze the beta-lactam antibiotic imipenem. Independently of its dipeptidase activity, acts as an adhesion receptor for neutrophil recruitment from bloodstream into inflamed lungs and liver. This is Dipeptidase 1 (DPEP1) from Homo sapiens (Human).